The following is a 398-amino-acid chain: Proton-coupled antiporter flippase LtaA (398 aa).

12 consecutive transmembrane segments (helical) span residues 15-40 (FIIM…LALL), 46-73 (IAVG…GFLL), 80-99 (LVLT…VIWF), 105-126 (VLIA…IMLA), 138-159 (GYVY…NVIF), 165-184 (QFAF…YYFV), 212-234 (ILFP…LPTY), 246-264 (YTMA…MLFL), 276-297 (MYWV…LSLI), 303-326 (VWVL…TFMA), 338-359 (WGVF…GGLI), and 371-389 (YFSA…IYFV).

Belongs to the major facilitator superfamily. LtaA family.

The protein localises to the cell membrane. It functions in the pathway cell wall biogenesis; lipoteichoic acid biosynthesis. In terms of biological role, proton-coupled antiporter flippase that catalyzes the translocation, from the inner to the outer leaflet of the cell membrane, of the lipid-linked disaccharide (anchor-LLD) that anchors lipoteichoic acids (LTA) to the cell membrane. The protein is Proton-coupled antiporter flippase LtaA (ltaA) of Staphylococcus saprophyticus subsp. saprophyticus (strain ATCC 15305 / DSM 20229 / NCIMB 8711 / NCTC 7292 / S-41).